The following is a 263-amino-acid chain: Proteasome subunit alpha type-1 (263 aa).

An N-acetylmethionine modification is found at M1. S110 carries the post-translational modification Phosphoserine; alternate. O-linked (GlcNAc) serine; alternate glycosylation is present at S110. Residue K115 forms a Glycyl lysine isopeptide (Lys-Gly) (interchain with G-Cter in ubiquitin) linkage. Position 177 is a phosphoserine (S177). A Glycyl lysine isopeptide (Lys-Gly) (interchain with G-Cter in ubiquitin) cross-link involves residue K208. The interval 232–263 (FLDGLEERPQRKAQPSQAADEPAEKADEPMEH) is disordered. Residues 253 to 263 (PAEKADEPMEH) show a composition bias toward basic and acidic residues.

It belongs to the peptidase T1A family. In terms of assembly, the 26S proteasome consists of a 20S proteasome core and two 19S regulatory subunits. The 20S proteasome core is a barrel-shaped complex made of 28 subunits that are arranged in four stacked rings. The two outer rings are each formed by seven alpha subunits, and the two inner rings are formed by seven beta subunits. The proteolytic activity is exerted by three beta-subunits PSMB5, PSMB6 and PSMB7. Interacts with NOTCH3. Interacts with ZFAND1. Post-translationally, proteolytically cleaved from a C-terminal extension in the course of the conversion of the proteasome from its latent form into its active form. Ubiquitous.

Its subcellular location is the cytoplasm. The protein localises to the nucleus. In terms of biological role, component of the 20S core proteasome complex involved in the proteolytic degradation of most intracellular proteins. This complex plays numerous essential roles within the cell by associating with different regulatory particles. Associated with two 19S regulatory particles, forms the 26S proteasome and thus participates in the ATP-dependent degradation of ubiquitinated proteins. The 26S proteasome plays a key role in the maintenance of protein homeostasis by removing misfolded or damaged proteins that could impair cellular functions, and by removing proteins whose functions are no longer required. Associated with the PA200 or PA28, the 20S proteasome mediates ubiquitin-independent protein degradation. This type of proteolysis is required in several pathways including spermatogenesis (20S-PA200 complex) or generation of a subset of MHC class I-presented antigenic peptides (20S-PA28 complex). In Rattus norvegicus (Rat), this protein is Proteasome subunit alpha type-1 (Psma1).